Consider the following 72-residue polypeptide: Putative DNA-directed RNA polymerase subunit omega (72 aa).

It belongs to the RNA polymerase subunit omega family.

Its subcellular location is the plastid. It is found in the chloroplast. The enzyme catalyses RNA(n) + a ribonucleoside 5'-triphosphate = RNA(n+1) + diphosphate. Its function is as follows. May be involved in RNA polymerase activity. This is Putative DNA-directed RNA polymerase subunit omega (rpoZ) from Cyanidium caldarium (Red alga).